The chain runs to 363 residues: Anhydro-N-acetylmuramic acid kinase (363 aa).

10 to 17 contributes to the ATP binding site; sequence GTSLDGLD.

The protein belongs to the anhydro-N-acetylmuramic acid kinase family.

It catalyses the reaction 1,6-anhydro-N-acetyl-beta-muramate + ATP + H2O = N-acetyl-D-muramate 6-phosphate + ADP + H(+). The protein operates within amino-sugar metabolism; 1,6-anhydro-N-acetylmuramate degradation. It functions in the pathway cell wall biogenesis; peptidoglycan recycling. In terms of biological role, catalyzes the specific phosphorylation of 1,6-anhydro-N-acetylmuramic acid (anhMurNAc) with the simultaneous cleavage of the 1,6-anhydro ring, generating MurNAc-6-P. Is required for the utilization of anhMurNAc either imported from the medium or derived from its own cell wall murein, and thus plays a role in cell wall recycling. This chain is Anhydro-N-acetylmuramic acid kinase, found in Pseudomonas fluorescens (strain Pf0-1).